Consider the following 147-residue polypeptide: Large ribosomal subunit protein uL11 (147 aa).

Belongs to the universal ribosomal protein uL11 family. In terms of assembly, part of the ribosomal stalk of the 50S ribosomal subunit. Interacts with L10 and the large rRNA to form the base of the stalk. L10 forms an elongated spine to which L12 dimers bind in a sequential fashion forming a multimeric L10(L12)X complex. One or more lysine residues are methylated.

In terms of biological role, forms part of the ribosomal stalk which helps the ribosome interact with GTP-bound translation factors. The sequence is that of Large ribosomal subunit protein uL11 from Corynebacterium aurimucosum (strain ATCC 700975 / DSM 44827 / CIP 107346 / CN-1) (Corynebacterium nigricans).